Consider the following 373-residue polypeptide: 4-hydroxy-3-methylbut-2-en-1-yl diphosphate synthase (flavodoxin) (373 aa).

4 residues coordinate [4Fe-4S] cluster: Cys270, Cys273, Cys305, and Glu312.

Belongs to the IspG family. [4Fe-4S] cluster is required as a cofactor.

The enzyme catalyses (2E)-4-hydroxy-3-methylbut-2-enyl diphosphate + oxidized [flavodoxin] + H2O + 2 H(+) = 2-C-methyl-D-erythritol 2,4-cyclic diphosphate + reduced [flavodoxin]. The protein operates within isoprenoid biosynthesis; isopentenyl diphosphate biosynthesis via DXP pathway; isopentenyl diphosphate from 1-deoxy-D-xylulose 5-phosphate: step 5/6. Its function is as follows. Converts 2C-methyl-D-erythritol 2,4-cyclodiphosphate (ME-2,4cPP) into 1-hydroxy-2-methyl-2-(E)-butenyl 4-diphosphate. This Pectobacterium carotovorum subsp. carotovorum (strain PC1) protein is 4-hydroxy-3-methylbut-2-en-1-yl diphosphate synthase (flavodoxin).